Here is a 107-residue protein sequence, read N- to C-terminus: Integration host factor subunit beta (107 aa).

Positions 76–107 are disordered; the sequence is FVPHFKPGKELRERVDGRAGEPLKADDPDDER. Residues 82 to 101 are compositionally biased toward basic and acidic residues; it reads PGKELRERVDGRAGEPLKAD.

The protein belongs to the bacterial histone-like protein family. Heterodimer of an alpha and a beta chain.

In terms of biological role, this protein is one of the two subunits of integration host factor, a specific DNA-binding protein that functions in genetic recombination as well as in transcriptional and translational control. The sequence is that of Integration host factor subunit beta from Burkholderia cenocepacia (strain ATCC BAA-245 / DSM 16553 / LMG 16656 / NCTC 13227 / J2315 / CF5610) (Burkholderia cepacia (strain J2315)).